The following is a 467-amino-acid chain: Uronate isomerase (467 aa).

The protein belongs to the metallo-dependent hydrolases superfamily. Uronate isomerase family.

The enzyme catalyses D-glucuronate = D-fructuronate. It catalyses the reaction aldehydo-D-galacturonate = keto-D-tagaturonate. Its pathway is carbohydrate metabolism; pentose and glucuronate interconversion. This Flavobacterium johnsoniae (strain ATCC 17061 / DSM 2064 / JCM 8514 / BCRC 14874 / CCUG 350202 / NBRC 14942 / NCIMB 11054 / UW101) (Cytophaga johnsonae) protein is Uronate isomerase.